The chain runs to 205 residues: Cytochrome c biogenesis ATP-binding export protein CcmA 1 (205 aa).

Positions 2–205 constitute an ABC transporter domain; it reads LEARDLYCER…LALTGGEAGL (204 aa). 34–41 is an ATP binding site; the sequence is GGNGAGKT.

This sequence belongs to the ABC transporter superfamily. CcmA exporter (TC 3.A.1.107) family. In terms of assembly, the complex is composed of two ATP-binding proteins (CcmA) and two transmembrane proteins (CcmB).

The protein resides in the cell inner membrane. The enzyme catalyses heme b(in) + ATP + H2O = heme b(out) + ADP + phosphate + H(+). Part of the ABC transporter complex CcmAB involved in the biogenesis of c-type cytochromes; once thought to export heme, this seems not to be the case, but its exact role is uncertain. Responsible for energy coupling to the transport system. The chain is Cytochrome c biogenesis ATP-binding export protein CcmA 1 from Salmonella paratyphi A (strain ATCC 9150 / SARB42).